Here is a 639-residue protein sequence, read N- to C-terminus: Cystathionine gamma-synthase (639 aa).

Lys443 bears the N6-(pyridoxal phosphate)lysine mark.

It belongs to the trans-sulfuration enzymes family. MET7 subfamily. Requires pyridoxal 5'-phosphate as cofactor.

Its subcellular location is the cytoplasm. It localises to the nucleus. It carries out the reaction O-succinyl-L-homoserine + L-cysteine = L,L-cystathionine + succinate + H(+). It functions in the pathway amino-acid biosynthesis; L-methionine biosynthesis via de novo pathway; L-cystathionine from O-succinyl-L-homoserine: step 1/1. Its function is as follows. Catalyzes the formation of L-cystathionine from O-succinyl-L-homoserine (OSHS) and L-cysteine, via a gamma-replacement reaction. In the absence of thiol, catalyzes gamma-elimination to form 2-oxobutanoate, succinate and ammonia. This chain is Cystathionine gamma-synthase, found in Saccharomyces cerevisiae (strain ATCC 204508 / S288c) (Baker's yeast).